A 985-amino-acid polypeptide reads, in one-letter code: Regulator of telomere elongation helicase 1 homolog (985 aa).

One can recognise a Helicase ATP-binding domain in the interval 7–303 (AGIPVHFPFE…QDMAGDEPKD (297 aa)). An ATP-binding site is contributed by 42–49 (SPTGTGKT). [4Fe-4S] cluster is bound by residues C146, C164, C173, and C209. The DEAH box signature appears at 252 to 255 (DEAH). Positions 863–883 (VKIHKRERSSPTAPESSSQVT) are disordered. Polar residues predominate over residues 872–882 (SPTAPESSSQV). Residue T874 is modified to Phosphothreonine.

The protein belongs to the helicase family. RAD3/XPD subfamily. Expressed in both male germline and somatic cells (at protein level). Expressed in ovarian germline stem cells (at protein level). Expressed in adult testes (at protein level). Expressed in the germarium including germline stem cells.

The protein localises to the nucleus. It is found in the chromosome. It catalyses the reaction ATP + H2O = ADP + phosphate + H(+). A probable ATP-dependent DNA helicase implicated in DNA repair and the maintenance of genomic stability. Acts as an anti-recombinase to counteract toxic recombination and limit crossover during meiosis. Regulates meiotic recombination and crossover homeostasis by physically dissociating strand invasion events and thereby promotes noncrossover repair by meiotic synthesis dependent strand annealing (SDSA) as well as disassembly of D loop recombination intermediates. In male germline stem cells (GSCs), plays a role in GSCs maintenance during larval germline development by modulating the expression of genes such as Stat92E and preventing DNA damage-induced checkpoint activation. May play a role in female germline stem cell maintenance. This is Regulator of telomere elongation helicase 1 homolog from Drosophila melanogaster (Fruit fly).